The sequence spans 323 residues: Mycothiol acetyltransferase (323 aa).

Glu-44 contributes to the 1D-myo-inositol 2-(L-cysteinylamino)-2-deoxy-alpha-D-glucopyranoside binding site. 2 N-acetyltransferase domains span residues 77 to 176 (GQDL…VSLR) and 173 to 323 (VSLR…VKEG). 98–100 (IAV) provides a ligand contact to acetyl-CoA. 3 residues coordinate 1D-myo-inositol 2-(L-cysteinylamino)-2-deoxy-alpha-D-glucopyranoside: Glu-200, Lys-240, and Glu-253. Acetyl-CoA-binding positions include 257–259 (VGV) and 264–270 (QGSGLGK). Tyr-291 contacts 1D-myo-inositol 2-(L-cysteinylamino)-2-deoxy-alpha-D-glucopyranoside.

Belongs to the acetyltransferase family. MshD subfamily. In terms of assembly, monomer.

The catalysed reaction is 1D-myo-inositol 2-(L-cysteinylamino)-2-deoxy-alpha-D-glucopyranoside + acetyl-CoA = mycothiol + CoA + H(+). Functionally, catalyzes the transfer of acetyl from acetyl-CoA to desacetylmycothiol (Cys-GlcN-Ins) to form mycothiol. The protein is Mycothiol acetyltransferase of Pseudarthrobacter chlorophenolicus (strain ATCC 700700 / DSM 12829 / CIP 107037 / JCM 12360 / KCTC 9906 / NCIMB 13794 / A6) (Arthrobacter chlorophenolicus).